The primary structure comprises 858 residues: Neurofilament medium polypeptide (858 aa).

Ser2 is modified (N-acetylserine). The segment at 2–99 (SYTMEPLGNP…KLSRSNEKEQ (98 aa)) is head. The disordered stretch occupies residues 22 to 57 (ATYSRASASPSSGFRSQSWSRGSGSTVSSSYKRTNL). A compositionally biased stretch (low complexity) spans 30–54 (SPSSGFRSQSWSRGSGSTVSSSYKR). Thr47 carries an O-linked (GlcNAc) threonine glycan. The 312-residue stretch at 96–407 (EKEQLQGLND…KLLEGEETRF (312 aa)) folds into the IF rod domain. Residues 100–131 (LQGLNDRFAGYIEKVHYLEQQNKEIEAELAAL) are coil 1A. A linker 1 region spans residues 132 to 144 (RQKHAGRAQLGDA). The tract at residues 145–243 (YEQELRELRG…EEEVAELLAQ (99 aa)) is coil 1B. The interval 244 to 260 (LQASHATVERKDYLKTD) is linker 12. Residues 261–282 (LTTALKEIRAQLECQSDHNMHQ) form a coil 2A region. The linker 2 stretch occupies residues 283 to 286 (AEEW). The segment at 287–407 (FKCRYAKLTE…KLLEGEETRF (121 aa)) is coil 2B. The segment at 408–858 (SAFSGSITGP…SHAVVKEIKE (451 aa)) is tail. Thr427 is a glycosylation site (O-linked (GlcNAc) threonine). The segment at 478 to 788 (AAKAQEEEQE…VVTNGLDVSP (311 aa)) is disordered. Acidic residues-rich tracts occupy residues 484 to 500 (EEQE…EEEA) and 509 to 524 (AAEE…EEEE). The span at 525–541 (AAKSDAAEEGGSKKEEI) shows a compositional bias: basic and acidic residues. Residues 542 to 555 (EEKEEGEEAEEEEA) are compositionally biased toward acidic residues. Residues 556–572 (EAKGKAEEAGAKVEKVK) are compositionally biased toward basic and acidic residues. Over residues 576-586 (AKSPPKSPPKS) the composition is skewed to pro residues. Residues 590-601 (EQAKAVQKAAAE) show a composition bias toward low complexity. Residues 602–623 (VGKDQKAEKAAEKAAKEEKAAS) show a composition bias toward basic and acidic residues. The segment covering 624–637 (PEKPATPKVTSPEK) has biased composition (low complexity). 2 stretches are compositionally biased toward basic and acidic residues: residues 651-664 (ITPE…KPTT) and 675-727 (ASPE…KAVV). Low complexity predominate over residues 728-743 (EESITVTKVTKVTAEV). Over residues 744 to 771 (EVSKEARKEDIAVNGEVEEKKDEAKEKE) the composition is skewed to basic and acidic residues.

It belongs to the intermediate filament family. In terms of processing, there are a number of repeats of the tripeptide K-S-P, NFM is phosphorylated on a number of the serines in this motif. It is thought that phosphorylation of NFM results in the formation of interfilament cross bridges that are important in the maintenance of axonal caliber. Phosphorylation seems to play a major role in the functioning of the larger neurofilament polypeptides (NF-M and NF-H), the levels of phosphorylation being altered developmentally and coincident with a change in the neurofilament function.

It localises to the cytoplasm. The protein resides in the cytoskeleton. It is found in the cell projection. The protein localises to the axon. Its function is as follows. Neurofilaments usually contain three intermediate filament proteins: NEFL, NEFM, and NEFH which are involved in the maintenance of neuronal caliber. May additionally cooperate with other neuronal intermediate filament proteins to form neuronal filamentous networks. This is Neurofilament medium polypeptide (NEFM) from Gallus gallus (Chicken).